The sequence spans 465 residues: Cysteine--tRNA ligase (465 aa).

Residue Cys-29 coordinates Zn(2+). Positions 31-41 (PTVYNYIHIGN) match the 'HIGH' region motif. 3 residues coordinate Zn(2+): Cys-209, His-234, and Glu-238. The 'KMSKS' region motif lies at 266-270 (KMSKS). Lys-269 is an ATP binding site. Ser-270 bears the Phosphoserine mark.

Belongs to the class-I aminoacyl-tRNA synthetase family. As to quaternary structure, monomer. It depends on Zn(2+) as a cofactor.

Its subcellular location is the cytoplasm. It catalyses the reaction tRNA(Cys) + L-cysteine + ATP = L-cysteinyl-tRNA(Cys) + AMP + diphosphate. The polypeptide is Cysteine--tRNA ligase (Bacillus cereus (strain B4264)).